Reading from the N-terminus, the 475-residue chain is Ankyrin repeat, SAM and basic leucine zipper domain-containing protein 1 (475 aa).

The tract at residues 1-24 (MAASALRGPPVAGGGESSESEDDG) is disordered. Phosphoserine is present on residues serine 17, serine 18, and serine 20. ANK repeat units follow at residues 45 to 74 (EKKE…SVDS), 78 to 107 (YGWT…NASF), 110 to 144 (DKQS…DPNV), 148 to 177 (RLMT…EVNT), 181 to 210 (NGYT…NKML), and 214 to 243 (DGKM…PLEG). Residues 272–334 (SYTAFGDLEV…KILAALKELQ (63 aa)) form the SAM domain.

In terms of assembly, interacts with DDX4, PIWIL1, RANBP9 and TDRD1.

Its subcellular location is the cytoplasm. Its function is as follows. Plays a central role during spermatogenesis by repressing transposable elements and preventing their mobilization, which is essential for the germline integrity. Acts via the piRNA metabolic process, which mediates the repression of transposable elements during meiosis by forming complexes composed of piRNAs and Piwi proteins and governs the methylation and subsequent repression of transposons. Its association with pi-bodies suggests a participation in the primary piRNAs metabolic process. Required prior to the pachytene stage to facilitate the production of multiple types of piRNAs, including those associated with repeats involved in the regulation of retrotransposons. May act by mediating protein-protein interactions during germ cell maturation. The sequence is that of Ankyrin repeat, SAM and basic leucine zipper domain-containing protein 1 (ASZ1) from Gorilla gorilla gorilla (Western lowland gorilla).